Here is a 1972-residue protein sequence, read N- to C-terminus: TP53-binding protein 1 (1972 aa).

3 disordered regions span residues 24-273 (DSQP…VAAM), 290-332 (QIQK…CSLA), and 346-507 (GQRS…LGLS). Phosphoserine is present on residues Ser-25 and Ser-63. Over residues 82–91 (EHLKENKVAD) the composition is skewed to basic and acidic residues. The span at 94 to 121 (DSSNLDTCGSISQVIEQLPQPNRTSSVL) shows a compositional bias: polar residues. Phosphoserine is present on residues Ser-105 and Ser-124. Residues 138–149 (ELEQKEKEKEED) show a composition bias toward basic and acidic residues. Polar residues predominate over residues 151–168 (SGNTTHSLGAEDTASSQL). Ser-166, Ser-176, and Ser-178 each carry phosphoserine. The segment covering 195-205 (LQSVTTNSGYT) has biased composition (polar residues). Lys-217 is covalently cross-linked (Glycyl lysine isopeptide (Lys-Gly) (interchain with G-Cter in SUMO1); alternate). Lys-217 is covalently cross-linked (Glycyl lysine isopeptide (Lys-Gly) (interchain with G-Cter in SUMO2); alternate). Phosphoserine is present on residues Ser-222, Ser-265, and Ser-294. Composition is skewed to polar residues over residues 300–322 (LSTQ…CSTP) and 346–361 (GQRS…NSSD). Thr-302 bears the Phosphothreonine mark. Phosphoserine is present on residues Ser-366, Ser-380, Ser-395, Ser-398, Ser-429, Ser-452, and Ser-464. Positions 426-441 (STVSPQASTPISQSTP) are enriched in polar residues. A compositionally biased stretch (pro residues) spans 442 to 452 (VFPPGSLPIPS). Over residues 481–490 (HSSSLTVECS) the composition is skewed to polar residues. Over residues 491–501 (KTSEIEPKNSP) the composition is skewed to basic and acidic residues. Phosphoserine is present on residues Ser-500, Ser-507, Ser-518, Ser-523, and Ser-525. Residues 520–531 (SEYSQSPKMESL) show a composition bias toward polar residues. Positions 520 to 556 (SEYSQSPKMESLSSHRIDEDGENTQIEDTEPMSPVLN) are disordered. A compositionally biased stretch (acidic residues) spans 538 to 549 (EDGENTQIEDTE). A phosphothreonine mark is found at Thr-543 and Thr-548. Residues Ser-552, Ser-566, and Ser-580 each carry the phosphoserine modification. Residues 568–595 (LMNPAQDGEVQLSQNDDKTKGDDTDTRD) are disordered. Residues 582 to 595 (NDDKTKGDDTDTRD) are compositionally biased toward basic and acidic residues. 4 positions are modified to phosphoserine: Ser-630, Ser-635, Ser-639, and Ser-640. Positions 649–687 (EIKEHHPEEGSSGSEVEEIPETPCESQGEELKEENMESV) are disordered. A Phosphothreonine modification is found at Thr-670. Phosphoserine occurs at positions 692, 724, 727, 771, 809, 830, 831, and 834. The tract at residues 742 to 911 (EQEAWEEATS…TPFHFTLPKE (170 aa)) is disordered. Residues 798-816 (AENRLDTKEEKSVEYEGDL) are compositionally biased toward basic and acidic residues. Positions 839 to 848 (RADDPLRLDQ) are enriched in basic and acidic residues. The span at 849-864 (ELQQPQTQEKTSNSLT) shows a compositional bias: polar residues. Thr-855 is subject to Phosphothreonine. A Glycyl lysine isopeptide (Lys-Gly) (interchain with G-Cter in SUMO1); alternate cross-link involves residue Lys-868. Residue Lys-868 forms a Glycyl lysine isopeptide (Lys-Gly) (interchain with G-Cter in SUMO2); alternate linkage. The span at 890–902 (HASQSFCESSSET) shows a compositional bias: polar residues. Thr-922 is subject to Phosphothreonine. Lys-930 participates in a covalent cross-link: Glycyl lysine isopeptide (Lys-Gly) (interchain with G-Cter in SUMO2). Phosphoserine is present on residues Ser-970 and Ser-975. Lys-984 participates in a covalent cross-link: Glycyl lysine isopeptide (Lys-Gly) (interchain with G-Cter in SUMO2). Disordered regions lie at residues 997–1028 (EASE…SVAS) and 1045–1103 (ENEA…VSPA). Polar residues predominate over residues 1018-1028 (GSTAVAESVAS). Residue Ser-1028 is modified to Phosphoserine. Thr-1056 is modified (phosphothreonine). Phosphoserine is present on Ser-1068. Positions 1071–1083 (EEEKEKLEGDHTI) are enriched in basic and acidic residues. Ser-1086, Ser-1094, Ser-1101, and Ser-1114 each carry phosphoserine. The segment covering 1127-1139 (DQKEGRSTNKENP) has biased composition (basic and acidic residues). Disordered regions lie at residues 1127–1148 (DQKE…ERPS), 1188–1232 (NFGK…QPPH), and 1269–1478 (VTEE…DGLD). Ser-1148 carries the phosphoserine modification. Positions 1188–1200 (NFGKQDATVQTER) are enriched in polar residues. Position 1214 is a phosphothreonine (Thr-1214). Phosphoserine occurs at positions 1216 and 1219. Residues 1272–1285 (ETEEPIVECQECET) show a composition bias toward acidic residues. 2 stretches are compositionally biased toward low complexity: residues 1298-1307 (DLGDISSFSS) and 1316-1329 (SSGT…SSGS). Phosphoserine is present on residues Ser-1317 and Ser-1342. An Omega-N-methylarginine modification is found at Arg-1355. The residue at position 1362 (Ser-1362) is a Phosphoserine. A Glycyl lysine isopeptide (Lys-Gly) (interchain with G-Cter in SUMO2) cross-link involves residue Lys-1365. Ser-1368 bears the Phosphoserine mark. At Thr-1372 the chain carries Phosphothreonine. Positions 1396-1403 (RGRGRRGR) match the GAR motif. Phosphoserine occurs at positions 1426 and 1430. Lys-1434 is covalently cross-linked (Glycyl lysine isopeptide (Lys-Gly) (interchain with G-Cter in SUMO1); alternate). Lys-1434 participates in a covalent cross-link: Glycyl lysine isopeptide (Lys-Gly) (interchain with G-Cter in SUMO2); alternate. Residues Ser-1460, Ser-1462, and Ser-1474 each carry the phosphoserine modification. A tudor-like region spans residues 1484–1603 (NSFVGLRVVA…NRLREQYGLG (120 aa)). The segment at 1495–1523 (WSSNGYFYSGKITRDVGAGKYKLLFDDGY) is interaction with dimethylated histone H4. A Glycyl lysine isopeptide (Lys-Gly) (interchain with G-Cter in SUMO1); alternate cross-link involves residue Lys-1563. Lys-1563 participates in a covalent cross-link: Glycyl lysine isopeptide (Lys-Gly) (interchain with G-Cter in SUMO2); alternate. The UDR signature appears at 1604–1631 (PYEAVTPLTKAADISLDNLVEGKRKRRS). Residue Thr-1609 is modified to Phosphothreonine. Ser-1618, Ser-1631, and Ser-1635 each carry phosphoserine. Disordered regions lie at residues 1622 to 1719 (LVEG…EEQR) and 1745 to 1768 (LASR…FLEI). Residues 1634–1650 (SSPATPTASSSSSTTPT) are compositionally biased toward low complexity. A phosphothreonine mark is found at Thr-1638 and Thr-1648. 3 positions are modified to phosphoserine: Ser-1656, Ser-1673, and Ser-1678. A Glycyl lysine isopeptide (Lys-Gly) (interchain with G-Cter in ubiquitin) cross-link involves residue Lys-1685. Phosphoserine occurs at positions 1701, 1759, and 1778. 2 consecutive BRCT domains span residues 1724–1848 (LNKT…NYLL) and 1864–1964 (PREN…QHPK).

Homoligomer. Interacts with p53/TP53 (via the central domain). Interacts with DCLRE1C. Interacts with histone H2AX and this requires phosphorylation of H2AX on 'Ser-139'. Interacts with histone H4 that has been dimethylated at 'Lys-20' (H4K20me2). Has low affinity for histone H4 containing monomethylated 'Lys-20' (H4K20me1). Does not bind histone H4 containing unmethylated or trimethylated 'Lys-20' (H4K20me3). Has low affinity for histone H3 that has been dimethylated on 'Lys-79'. Has very low affinity for histone H3 that has been monomethylated on 'Lys-79' (in vitro). Does not bind unmethylated histone H3. Interacts with histone H2A monoubiquitinated at 'Lys-15' (H2AK15Ub). Interacts with PWWP3A/EXPAND1. Interacts with CHEK2; modulates CHEK2 phosphorylation at 'Thr-68' in response to infrared. Interacts with MSL1; this interaction may be required for MSL1 DNA repair activity, but not for histone acetyltransferase activity. Interacts (when phosphorylated by ATM) with RIF1. Interacts (via the Tudor-like domain) with NUDT16L1/TIRR; interaction masks the Tudor-like domain and prevents recruitment to chromatin. Interacts with PAXIP1. Interacts with SHLD2. Interacts (when phosphorylated) with TOPBP1. Interacts with GFI1; promoting methylation by PRMT1. Interacts with (phosphorylated) DYNLL1; specifically binds DYNLL1 phosphorylated at 'Ser-88' and promotes its recruitment to double stand breaks (DSBs). In terms of assembly, (Microbial infection) Interacts (via C-terminus) with Epstein-Barr virus lytic switch protein BZLF1 (via C-terminus); this interaction is involved in the activation of the viral lytic cycle. Asymmetrically dimethylated on Arg residues by PRMT1. Methylation is required for DNA binding. In terms of processing, phosphorylated at basal level in the absence of DNA damage. Phosphorylated by ATM in response to DNA damage: phosphorylation at different sites promotes interaction with different set of proteins: phosphorylation at the N-terminus by ATM (residues from 6-178) promotes interaction with PAXIP1 and non-homologous end joining (NHEJ) of dysfunctional telomeres. Phosphorylation by ATM at residues that are located more C-terminus (residues 300-650) leads to promote interaction with RIF1. Interaction with RIF1 leads to disrupt interaction with NUDT16L1/TIRR. Phosphorylation at Thr-1609 and Ser-1618 in the UDR motif blocks interaction with H2AK15ub. Dephosphorylated by PPP4C. Hyperphosphorylation during mitosis correlates with its exclusion from chromatin and DNA lesions. Hyperphosphorylated in an ATR-dependent manner in response to DNA damage induced by UV irradiation. Dephosphorylated by PPP5C. Phosphorylation at Ser-366 and Thr-670 promotes interaction with TOPBP1. Phosphorylated by VRK1. Post-translationally, monoubiquitinated at Lys-1685 by MSL2 is reponse to DNA damage, leading to its stabilization.

It localises to the nucleus. The protein resides in the chromosome. Its subcellular location is the centromere. The protein localises to the kinetochore. Double-strand break (DSB) repair protein involved in response to DNA damage, telomere dynamics and class-switch recombination (CSR) during antibody genesis. Plays a key role in the repair of double-strand DNA breaks (DSBs) in response to DNA damage by promoting non-homologous end joining (NHEJ)-mediated repair of DSBs and specifically counteracting the function of the homologous recombination (HR) repair protein BRCA1. In response to DSBs, phosphorylation by ATM promotes interaction with RIF1 and dissociation from NUDT16L1/TIRR, leading to recruitment to DSBs sites. Recruited to DSBs sites by recognizing and binding histone H2A monoubiquitinated at 'Lys-15' (H2AK15Ub) and histone H4 dimethylated at 'Lys-20' (H4K20me2), two histone marks that are present at DSBs sites. Required for immunoglobulin class-switch recombination (CSR) during antibody genesis, a process that involves the generation of DNA DSBs. Participates in the repair and the orientation of the broken DNA ends during CSR. In contrast, it is not required for classic NHEJ and V(D)J recombination. Promotes NHEJ of dysfunctional telomeres via interaction with PAXIP1. The polypeptide is TP53-binding protein 1 (Homo sapiens (Human)).